A 172-amino-acid polypeptide reads, in one-letter code: Sec-independent protein translocase protein TatB (172 aa).

A helical membrane pass occupies residues 1 to 21; the sequence is MFDIGWSELLVIGVVALIAIG.

This sequence belongs to the TatB family. The Tat system comprises two distinct complexes: a TatABC complex, containing multiple copies of TatA, TatB and TatC subunits, and a separate TatA complex, containing only TatA subunits. Substrates initially bind to the TatABC complex, which probably triggers association of the separate TatA complex to form the active translocon.

It localises to the cell inner membrane. Part of the twin-arginine translocation (Tat) system that transports large folded proteins containing a characteristic twin-arginine motif in their signal peptide across membranes. Together with TatC, TatB is part of a receptor directly interacting with Tat signal peptides. TatB may form an oligomeric binding site that transiently accommodates folded Tat precursor proteins before their translocation. This chain is Sec-independent protein translocase protein TatB, found in Rhodopseudomonas palustris (strain BisB18).